The following is a 382-amino-acid chain: Quinolinate synthase (382 aa).

The iminosuccinate site is built by His63 and Ser84. Residue Cys129 coordinates [4Fe-4S] cluster. Residues 155–157 (YAN) and Ser172 contribute to the iminosuccinate site. Cys216 is a binding site for [4Fe-4S] cluster. Residues 242–244 (HPE) and Thr259 each bind iminosuccinate. Cys313 provides a ligand contact to [4Fe-4S] cluster.

The protein belongs to the quinolinate synthase family. Type 1 subfamily. [4Fe-4S] cluster serves as cofactor.

Its subcellular location is the cytoplasm. The catalysed reaction is iminosuccinate + dihydroxyacetone phosphate = quinolinate + phosphate + 2 H2O + H(+). Its pathway is cofactor biosynthesis; NAD(+) biosynthesis; quinolinate from iminoaspartate: step 1/1. Its function is as follows. Catalyzes the condensation of iminoaspartate with dihydroxyacetone phosphate to form quinolinate. The protein is Quinolinate synthase of Ralstonia pickettii (strain 12J).